The sequence spans 453 residues: Trigger factor (453 aa).

Residues 171–256 (GDRVTISFKG…ATVLEAPQES (86 aa)) enclose the PPIase FKBP-type domain.

Belongs to the FKBP-type PPIase family. Tig subfamily.

The protein localises to the cytoplasm. The catalysed reaction is [protein]-peptidylproline (omega=180) = [protein]-peptidylproline (omega=0). In terms of biological role, involved in protein export. Acts as a chaperone by maintaining the newly synthesized protein in an open conformation. Functions as a peptidyl-prolyl cis-trans isomerase. This Rhodopseudomonas palustris (strain BisB18) protein is Trigger factor.